Consider the following 210-residue polypeptide: Glutathione S-transferase P 2 (210 aa).

The 80-residue stretch at 2 to 81 (PPYTIVYFPS…HLGRSLGLYG (80 aa)) folds into the GST N-terminal domain. Glutathione is bound by residues Tyr-8, Arg-14, Trp-39, Lys-45, 52–53 (QL), and 65–66 (QS). The GST C-terminal domain occupies 83 to 204 (NQREAAQVDM…SSPEHVNRPI (122 aa)).

The protein belongs to the GST superfamily. Pi family. In terms of assembly, homodimer. As to expression, selectively expressed in gall bladder, colon, heart, and skeletal muscle.

The enzyme catalyses RX + glutathione = an S-substituted glutathione + a halide anion + H(+). Functionally, conjugation of reduced glutathione to a wide number of exogenous and endogenous hydrophobic electrophiles. Cannot metabolize 1-chloro-2,4-dinitrobenzene. The chain is Glutathione S-transferase P 2 (Gstp2) from Mus musculus (Mouse).